Consider the following 587-residue polypeptide: Cryptochrome-1 (587 aa).

The 130-residue stretch at 3–132 (VNAVHWFRKG…EVIVRISHTL (130 aa)) folds into the Photolyase/cryptochrome alpha/beta domain. Residue Lys11 forms a Glycyl lysine isopeptide (Lys-Gly) (interchain with G-Cter in ubiquitin) linkage. Residues 50–54 (NRWRF) carry the LIR 1 motif. The residue at position 71 (Ser71) is a Phosphoserine; by AMPK. Positions 82–87 (DVFPRL) match the LIR 2 motif. Lys107 is covalently cross-linked (Glycyl lysine isopeptide (Lys-Gly) (interchain with G-Cter in ubiquitin)). The LIR 3 signature appears at 151–156 (KRFQTL). Residue Lys159 forms a Glycyl lysine isopeptide (Lys-Gly) (interchain with G-Cter in ubiquitin) linkage. Ser247 bears the Phosphoserine; by MAPK mark. An FAD-binding site is contributed by Ser252. Short sequence motifs (LIR) lie at residues 255–260 (LRFGCL) and 271–276 (DLYKKV). Residue Ser280 is modified to Phosphoserine; by AMPK. Residues 285 to 290 (SLYGQL) carry the LIR 6 motif. Gln289 is an FAD binding site. Lys329 is covalently cross-linked (Glycyl lysine isopeptide (Lys-Gly) (interchain with G-Cter in ubiquitin)). An LIR 7 motif is present at residues 335-339 (TGFPW). His355 contributes to the FAD binding site. A required for inhibition of CLOCK-BMAL1-mediated transcription region spans residues 371–470 (WISWEEGMKV…LIGVNYPKPM (100 aa)). The short motif at 379–384 (KVFEEL) is the LIR 8 element. 387 to 389 (DAD) provides a ligand contact to FAD. 3 consecutive short sequence motifs (LIR) follow at residues 395 to 400 (GSWMWL), 411 to 416 (HCYCPV), and 430 to 435 (RRYLPV). Positions 471–493 (VNHAEASRLNIERMKQIYQQLSR) are interaction with TIMELESS. A Glycyl lysine isopeptide (Lys-Gly) (interchain with G-Cter in ubiquitin) cross-link involves residue Lys485. 2 short sequence motifs (LIR) span residues 486–491 (QIYQQL) and 492–497 (SRYRGL). The disordered stretch occupies residues 554–587 (GSSSMGHGLSNGKRPSQEEDTQSIGPKVQRQSTN). The residue at position 569 (Ser569) is a Phosphoserine.

This sequence belongs to the DNA photolyase class-1 family. In terms of assembly, component of the circadian core oscillator, which includes the CRY proteins, CLOCK or NPAS2, BMAL1 or BMAL2, CSNK1D and/or CSNK1E, TIMELESS, and the PER proteins. Interacts directly with TIMELESS. Interacts directly with PER1, PER2 and PER3; interaction with PER2 inhibits its ubiquitination and vice versa. Interacts with FBXL21. Interacts with FBXL3. Interacts with CLOCK-BMAL1 independently of PER2 and DNA. Interacts with HDAC1, HDAC2 and SIN3B. Interacts with nuclear receptors AR, NR1D1, NR3C1/GR, RORA and RORC; the interaction with at least NR3C1/GR is ligand dependent. Interacts with PRKDC. Interacts with the G protein subunit alpha GNAS; the interaction may block GPCR-mediated regulation of cAMP concentrations. Interacts with PRMT5. Interacts with EZH2. Interacts with MYBBP1A, DOCK7, HNRNPU, RPL7A, RPL8 and RPS3. Interacts with PPP5C (via TPR repeats). Interacts with MAP1LC3B. Interacts with CLOCK. Interacts with BMAL1. Interacts weakly with HDAC3; this interaction is enhanced in the presence of FBXL3. Interacts with TRIM28, KCTD5 and DDB1 Interacts with HNF4A. Interacts with PSMD2 in a KDM8-dependent manner. Interacts with KDM8 in a FBXL3-dependent manner. Interacts with PPARG in a ligand-dependent manner. Interacts with PPARD (via domain NR LBD) and NR1I2 (via domain NR LBD) in a ligand-dependent manner. Interacts with PPARA, NR1I3 and VDR. The cofactor is FAD. Requires (6R)-5,10-methylene-5,6,7,8-tetrahydrofolate as cofactor. In terms of processing, phosphorylation on Ser-247 by MAPK is important for the inhibition of CLOCK-BMAL1-mediated transcriptional activity. Phosphorylation by CSNK1E requires interaction with PER1 or PER2. Phosphorylation at Ser-71 and Ser-280 by AMPK decreases protein stability. Phosphorylation at Ser-569 exhibits a robust circadian rhythm with a peak at CT8, increases protein stability, prevents SCF(FBXL3)-mediated degradation and is antagonized by interaction with PRKDC. Ubiquitinated by the SCF(FBXL3) and SCF(FBXL21) complexes, regulating the balance between degradation and stabilization. The SCF(FBXL3) complex is mainly nuclear and mediates ubiquitination and subsequent degradation of CRY1. In contrast, cytoplasmic SCF(FBXL21) complex-mediated ubiquitination leads to stabilize CRY1 and counteract the activity of the SCF(FBXL3) complex. The SCF(FBXL3) and SCF(FBXL21) complexes probably mediate ubiquitination at different Lys residues. Ubiquitination at Lys-11 and Lys-107 are specifically ubiquitinated by the SCF(FBXL21) complex but not by the SCF(FBXL3) complex. Ubiquitination may be inhibited by PER2. Deubiquitinated by USP7. Post-translationally, undergoes autophagy-mediated degradation in the liver in a time-dependent manner. Autophagic degradation of CRY1 (an inhibitor of gluconeogenesis) occurs during periods of reduced feeding allowing induction of gluconeogenesis and maintenance of blood glucose levels. Expressed in all tissues tested including spleen, liver, skeletal muscle, kidney, brain, intestine, eye, harderian gland, liver and heart. Highest levels in the eye, brain, kidney and harderian gland. In the brain, especially located to the suprachiasma nucleus (SCN).

It localises to the cytoplasm. It is found in the nucleus. Transcriptional repressor which forms a core component of the circadian clock. The circadian clock, an internal time-keeping system, regulates various physiological processes through the generation of approximately 24 hour circadian rhythms in gene expression, which are translated into rhythms in metabolism and behavior. It is derived from the Latin roots 'circa' (about) and 'diem' (day) and acts as an important regulator of a wide array of physiological functions including metabolism, sleep, body temperature, blood pressure, endocrine, immune, cardiovascular, and renal function. Consists of two major components: the central clock, residing in the suprachiasmatic nucleus (SCN) of the brain, and the peripheral clocks that are present in nearly every tissue and organ system. Both the central and peripheral clocks can be reset by environmental cues, also known as Zeitgebers (German for 'timegivers'). The predominant Zeitgeber for the central clock is light, which is sensed by retina and signals directly to the SCN. The central clock entrains the peripheral clocks through neuronal and hormonal signals, body temperature and feeding-related cues, aligning all clocks with the external light/dark cycle. Circadian rhythms allow an organism to achieve temporal homeostasis with its environment at the molecular level by regulating gene expression to create a peak of protein expression once every 24 hours to control when a particular physiological process is most active with respect to the solar day. Transcription and translation of core clock components (CLOCK, NPAS2, BMAL1, BMAL2, PER1, PER2, PER3, CRY1 and CRY2) plays a critical role in rhythm generation, whereas delays imposed by post-translational modifications (PTMs) are important for determining the period (tau) of the rhythms (tau refers to the period of a rhythm and is the length, in time, of one complete cycle). A diurnal rhythm is synchronized with the day/night cycle, while the ultradian and infradian rhythms have a period shorter and longer than 24 hours, respectively. Disruptions in the circadian rhythms contribute to the pathology of cardiovascular diseases, cancer, metabolic syndromes and aging. A transcription/translation feedback loop (TTFL) forms the core of the molecular circadian clock mechanism. Transcription factors, CLOCK or NPAS2 and BMAL1 or BMAL2, form the positive limb of the feedback loop, act in the form of a heterodimer and activate the transcription of core clock genes and clock-controlled genes (involved in key metabolic processes), harboring E-box elements (5'-CACGTG-3') within their promoters. The core clock genes: PER1/2/3 and CRY1/2 which are transcriptional repressors form the negative limb of the feedback loop and interact with the CLOCK|NPAS2-BMAL1|BMAL2 heterodimer inhibiting its activity and thereby negatively regulating their own expression. This heterodimer also activates nuclear receptors NR1D1/2 and RORA/B/G, which form a second feedback loop and which activate and repress BMAL1 transcription, respectively. CRY1 and CRY2 have redundant functions but also differential and selective contributions at least in defining the pace of the SCN circadian clock and its circadian transcriptional outputs. More potent transcriptional repressor in cerebellum and liver than CRY2, though more effective in lengthening the period of the SCN oscillator. On its side, CRY2 seems to play a critical role in tuning SCN circadian period by opposing the action of CRY1. With CRY2, is dispensable for circadian rhythm generation but necessary for the development of intercellular networks for rhythm synchrony. Capable of translocating circadian clock core proteins such as PER proteins to the nucleus. Interacts with CLOCK-BMAL1 independently of PER proteins and is found at CLOCK-BMAL1-bound sites, suggesting that CRY may act as a molecular gatekeeper to maintain CLOCK-BMAL1 in a poised and repressed state until the proper time for transcriptional activation. Represses the CLOCK-BMAL1 induced transcription of BHLHE40/DEC1, ATF4, MTA1, KLF10 and NAMPT. May repress circadian target genes expression in collaboration with HDAC1 and HDAC2 through histone deacetylation. Mediates the clock-control activation of ATR and modulates ATR-mediated DNA damage checkpoint. In liver, mediates circadian regulation of cAMP signaling and gluconeogenesis by binding to membrane-coupled G proteins and blocking glucagon-mediated increases in intracellular cAMP concentrations and CREB1 phosphorylation. Inhibits hepatic gluconeogenesis by decreasing nuclear FOXO1 levels that down-regulates gluconeogenic gene expression. Besides its role in the maintenance of the circadian clock, is also involved in the regulation of other processes. Represses glucocorticoid receptor NR3C1/GR-induced transcriptional activity by binding to glucocorticoid response elements (GREs). Plays a key role in glucose and lipid metabolism modulation, in part, through the transcriptional regulation of genes involved in these pathways, such as LEP or ACSL4. Represses PPARD and its target genes in the skeletal muscle and limits exercise capacity. Plays an essential role in the generation of circadian rhythms in the retina. Represses the transcriptional activity of NR1I2. The protein is Cryptochrome-1 (CRY1) of Spalax judaei (Judean Mountains blind mole rat).